Reading from the N-terminus, the 394-residue chain is UDP-glucose 6-dehydrogenase (394 aa).

NAD(+) contacts are provided by residues 2 to 19 (KIAI…AVLL), Val-11, Asp-29, Lys-34, Thr-83, Thr-118, and Glu-145. Residues 141 to 145 (EFLRE), Lys-203, Asn-207, 248 to 252 (YNNPS), and Gly-256 each bind substrate. NAD(+) is bound at residue Tyr-258. Cys-259 functions as the Nucleophile in the catalytic mechanism. Residue Lys-262 participates in NAD(+) binding. Lys-313 contributes to the substrate binding site. Arg-320 is a binding site for NAD(+).

This sequence belongs to the UDP-glucose/GDP-mannose dehydrogenase family.

The catalysed reaction is UDP-alpha-D-glucose + 2 NAD(+) + H2O = UDP-alpha-D-glucuronate + 2 NADH + 3 H(+). The protein operates within nucleotide-sugar biosynthesis; UDP-alpha-D-glucuronate biosynthesis; UDP-alpha-D-glucuronate from UDP-alpha-D-glucose: step 1/1. Catalyzes the formation of UDP-glucuronic acid which is required for capsular hyaluronic acid synthesis. Directly responsible for the transformation of some unencapsulated serotype-3 SP mutants to the encapsulated phenotype. The chain is UDP-glucose 6-dehydrogenase (cap3A) from Streptococcus pneumoniae.